The chain runs to 83 residues: uncharacterized protein (83 aa).

3 consecutive transmembrane segments (helical) span residues 7-26 (FARF…IVSY), 36-58 (LSPL…ILPF), and 65-82 (ILTV…YLAF).

The protein resides in the cell membrane. This is an uncharacterized protein from Archaeoglobus fulgidus (strain ATCC 49558 / DSM 4304 / JCM 9628 / NBRC 100126 / VC-16).